The following is a 316-amino-acid chain: Glutathione synthetase (316 aa).

The ATP-grasp domain maps to 125-310 (KLFTAWFSDL…ITGMLMDAIE (186 aa)). A glycan (N-beta-linked (GlcNAc) arginine) is linked at R256. 2 residues coordinate Mg(2+): E281 and N283.

Belongs to the prokaryotic GSH synthase family. Mg(2+) is required as a cofactor. It depends on Mn(2+) as a cofactor.

The catalysed reaction is gamma-L-glutamyl-L-cysteine + glycine + ATP = glutathione + ADP + phosphate + H(+). Its pathway is sulfur metabolism; glutathione biosynthesis; glutathione from L-cysteine and L-glutamate: step 2/2. This chain is Glutathione synthetase, found in Escherichia coli O127:H6 (strain E2348/69 / EPEC).